Consider the following 256-residue polypeptide: UPF0246 protein Sde_3824 (256 aa).

The protein belongs to the UPF0246 family.

The chain is UPF0246 protein Sde_3824 from Saccharophagus degradans (strain 2-40 / ATCC 43961 / DSM 17024).